Reading from the N-terminus, the 102-residue chain is Putative sortase YwpE (102 aa).

The active-site Proton donor/acceptor is H17. C78 acts as the Acyl-thioester intermediate in catalysis.

The protein belongs to the bacterial sortase family.

Functionally, seems not to play a major role if any as a sortase. In Bacillus subtilis (strain 168), this protein is Putative sortase YwpE (ywpE).